The chain runs to 485 residues: Glycogen synthase (485 aa).

Residue K15 coordinates ADP-alpha-D-glucose.

Belongs to the glycosyltransferase 1 family. Bacterial/plant glycogen synthase subfamily.

The catalysed reaction is [(1-&gt;4)-alpha-D-glucosyl](n) + ADP-alpha-D-glucose = [(1-&gt;4)-alpha-D-glucosyl](n+1) + ADP + H(+). It participates in glycan biosynthesis; glycogen biosynthesis. Synthesizes alpha-1,4-glucan chains using ADP-glucose. This Thermosipho africanus (strain TCF52B) protein is Glycogen synthase.